The following is a 503-amino-acid chain: Probable cytosol aminopeptidase (503 aa).

The Mn(2+) site is built by K270 and D275. K282 is a catalytic residue. Mn(2+) is bound by residues D293, D352, and E354. R356 is a catalytic residue.

Belongs to the peptidase M17 family. It depends on Mn(2+) as a cofactor.

The protein resides in the cytoplasm. The catalysed reaction is Release of an N-terminal amino acid, Xaa-|-Yaa-, in which Xaa is preferably Leu, but may be other amino acids including Pro although not Arg or Lys, and Yaa may be Pro. Amino acid amides and methyl esters are also readily hydrolyzed, but rates on arylamides are exceedingly low.. It catalyses the reaction Release of an N-terminal amino acid, preferentially leucine, but not glutamic or aspartic acids.. Its function is as follows. Presumably involved in the processing and regular turnover of intracellular proteins. Catalyzes the removal of unsubstituted N-terminal amino acids from various peptides. In Shigella dysenteriae serotype 1 (strain Sd197), this protein is Probable cytosol aminopeptidase.